We begin with the raw amino-acid sequence, 264 residues long: MQKPRIVLKIGSSNLCNGKIIDKTQIKALAQIISELKMRFDVILVSSGAVASGHTTLHIDRNTLQNKQALASIGQPLLMESYREALKDYAIPTAQLLLVWRDFDSRKNTTFAKDTIDTLLAHNALPIINENDTIATDEMVFGDNDRLGAYVTYYFGAKLLIILSDIDGYFDKNPHQYDDAQILPIVHSIPSQALEQTHSPHGDFATGGIVTKLIAADFLLQRKCMMFLSHGRKLDVLRDFLLHNKQSSGTLFCPADSQGIKTLI.

Lys-9 contacts ATP. Substrate-binding residues include Ser-47, Asp-132, and Asn-144. ATP-binding positions include Ser-164–Asp-165 and Thr-206–Lys-212.

It belongs to the glutamate 5-kinase family.

Its subcellular location is the cytoplasm. The catalysed reaction is L-glutamate + ATP = L-glutamyl 5-phosphate + ADP. It functions in the pathway amino-acid biosynthesis; L-proline biosynthesis; L-glutamate 5-semialdehyde from L-glutamate: step 1/2. In terms of biological role, catalyzes the transfer of a phosphate group to glutamate to form L-glutamate 5-phosphate. The protein is Glutamate 5-kinase of Helicobacter hepaticus (strain ATCC 51449 / 3B1).